Consider the following 160-residue polypeptide: Putative 4-hydroxy-4-methyl-2-oxoglutarate aldolase (160 aa).

Residues Gly75–Ile78 and Arg97 each bind substrate. Asp98 is an a divalent metal cation binding site.

Belongs to the class II aldolase/RraA-like family. Homotrimer. A divalent metal cation is required as a cofactor.

The enzyme catalyses 4-hydroxy-4-methyl-2-oxoglutarate = 2 pyruvate. The catalysed reaction is oxaloacetate + H(+) = pyruvate + CO2. Functionally, catalyzes the aldol cleavage of 4-hydroxy-4-methyl-2-oxoglutarate (HMG) into 2 molecules of pyruvate. Also contains a secondary oxaloacetate (OAA) decarboxylase activity due to the common pyruvate enolate transition state formed following C-C bond cleavage in the retro-aldol and decarboxylation reactions. This Rhodospirillum centenum (strain ATCC 51521 / SW) protein is Putative 4-hydroxy-4-methyl-2-oxoglutarate aldolase.